Reading from the N-terminus, the 179-residue chain is CASP-like protein 5A2 (179 aa).

Over 1 to 54 (MEATSHPAVHPVAVPPQFQGAGPPAIQMKDFPGSPGTAGGLALRFTQFGFSLIS) the chain is Cytoplasmic. The next 2 helical transmembrane spans lie at 55 to 75 (LCIM…FLVA) and 76 to 96 (TMVF…YALL). At 97–114 (TQRSFRNPLIVSLFVVGD) the chain is on the cytoplasmic side. A helical membrane pass occupies residues 115 to 135 (WVTSTMTFAGACAAAGITVLI). Residues 136-154 (DNDLEQCGPNHCGRFEAAA) lie on the Extracellular side of the membrane. A helical transmembrane segment spans residues 155–175 (AMAFMSWTATTLSFCLSFWLL). Residues 176 to 179 (ASCR) lie on the Cytoplasmic side of the membrane.

The protein belongs to the Casparian strip membrane proteins (CASP) family. Homodimer and heterodimers.

The protein localises to the cell membrane. The chain is CASP-like protein 5A2 from Physcomitrium patens (Spreading-leaved earth moss).